Reading from the N-terminus, the 480-residue chain is Uridine/deoxyuridine transporter (480 aa).

14 consecutive transmembrane segments (helical) span residues 14–34 (VGSI…FQLN), 55–75 (SIAL…LFLP), 93–113 (LTMI…LMIG), 115–135 (ILQG…HVKV), 147–167 (ILTS…GWLV), 174–194 (SVFF…SFGT), 207–227 (WTGV…VNAL), 239–259 (WLLA…FWQV), 280–300 (GLLI…NGII), 320–340 (LVTL…SGFL), 358–378 (IIGI…LLLL), 382–402 (FIGI…GIVL), 417–437 (GMFN…PTVL), and 449–469 (ISGI…SFLI).

Belongs to the major facilitator superfamily. EmrB family.

Its subcellular location is the cell membrane. Functionally, responsible for the uptake of uridine and deoxyuridine. Not involved in purine nucleoside uptake. This is Uridine/deoxyuridine transporter from Lactococcus lactis subsp. cremoris (strain MG1363).